A 119-amino-acid polypeptide reads, in one-letter code: Holo-[acyl-carrier-protein] synthase (119 aa).

Positions 5 and 51 each coordinate Mg(2+).

It belongs to the P-Pant transferase superfamily. AcpS family. Mg(2+) is required as a cofactor.

The protein resides in the cytoplasm. The catalysed reaction is apo-[ACP] + CoA = holo-[ACP] + adenosine 3',5'-bisphosphate + H(+). In terms of biological role, transfers the 4'-phosphopantetheine moiety from coenzyme A to a Ser of acyl-carrier-protein. This Helicobacter pylori (strain G27) protein is Holo-[acyl-carrier-protein] synthase.